An 849-amino-acid chain; its full sequence is Leucine--tRNA ligase (849 aa).

Positions 44-54 (PYPSGRIHMGH) match the 'HIGH' region motif. Residues 620-624 (KMSKS) carry the 'KMSKS' region motif. ATP is bound at residue Lys623.

This sequence belongs to the class-I aminoacyl-tRNA synthetase family.

It localises to the cytoplasm. The enzyme catalyses tRNA(Leu) + L-leucine + ATP = L-leucyl-tRNA(Leu) + AMP + diphosphate. This is Leucine--tRNA ligase from Sphingopyxis alaskensis (strain DSM 13593 / LMG 18877 / RB2256) (Sphingomonas alaskensis).